We begin with the raw amino-acid sequence, 775 residues long: MSFDRPEIYSAPVLQGESPNDDDNTEIIKSFKNFILEFRLDSQFIYRDQLRNNILVKNYSLTVNMEHLIGYNEDIYKKLSDEPSDIIPLFETAITQVAKRISILSRAQSANNNDKDPENTSMDTDSLLLNSLPTFQLILNSNANQIPLRDLDSEHVSKIVRLSGIIISTSVLSSRATYLSIMCRNCRHTTSITINNFNSITGNTVSLPRSCLSTIESESSMANESNIGDESTKKNCGPDPYIIIHESSKFIDQQFLKLQEIPELVPVGEMPRNLTMTCDRYLTNKVIPGTRVTIVGIYSIYNSKNGAGSGRSGGGNGGSGVAIRTPYIKILGIQSDVETSSIWNSVTMFTEEEEEEFLQLSRNPKLYEILTNSIAPSIFGNEDIKKAIVCLLMGGSKKILPDGMRLRGDINVLLLGDPGTAKSQLLKFVEKVSPIAVYTSGKGSSAAGLTASVQRDPMTREFYLEGGAMVLADGGVVCIDEFDKMRDEDRVAIHEAMEQQTISIAKAGITTVLNSRTSVLAAANPIYGRYDDLKSPGDNIDFQTTILSRFDMIFIVKDDHNEERDISIANHVINIHTGNANAMQNQQEENGSEISIEKMKRYITYCRLKCAPRLSPQAAEKLSSNFVTIRKQLLINELESTERSSIPITIRQLEAIIRITESLAKLELSPIAQERHVDEAIRLFQASTMDAASQDPIGGLNQASGTSLSEIRRFEQELKRRLPIGWSTSYQTLRREFVDTHRFSQLALDKALYALEKHETIQLRHQGQNIYRSGV.

Residues 1 to 22 (MSFDRPEIYSAPVLQGESPNDD) form a disordered region. The region spanning 366–573 (LYEILTNSIA…RDISIANHVI (208 aa)) is the MCM domain. Residue 416-423 (GDPGTAKS) coordinates ATP. Residues 548–551 (SRFD) carry the Arginine finger motif.

It belongs to the MCM family. As to quaternary structure, component of the MCM2-7 complex. The complex forms a toroidal hexameric ring with the proposed subunit order MCM2-MCM6-MCM4-MCM7-MCM3-MCM5; loaded onto DNA, forms a head-head double hexamer. Interacts with CSM1.

The protein localises to the nucleus. It carries out the reaction ATP + H2O = ADP + phosphate + H(+). Functionally, acts as a component of the MCM2-7 complex (MCM complex) which is the putative replicative helicase essential for 'once per cell cycle' DNA replication initiation and elongation in eukaryotic cells. The active ATPase sites in the MCM2-7 ring are formed through the interaction surfaces of two neighboring subunits such that a critical structure of a conserved arginine finger motif is provided in trans relative to the ATP-binding site of the Walker A box of the adjacent subunit. The six ATPase active sites, however, are likely to contribute differentially to the complex helicase activity; specifically the MCM2-MCM5 association is proposed to be reversible and to mediate a open ring conformation which may facilitate DNA loading. Once loaded onto DNA, double hexamers can slide on dsDNA in the absence of ATPase activity. The sequence is that of Minichromosome maintenance protein 5 (MCM5) from Saccharomyces cerevisiae (strain ATCC 204508 / S288c) (Baker's yeast).